Reading from the N-terminus, the 263-residue chain is PDZ domain-containing protein 9 (263 aa).

The 80-residue stretch at 30–109 (QTKLTVGSMG…GTILQIKVYR (80 aa)) folds into the PDZ domain.

The protein is PDZ domain-containing protein 9 (PDZD9) of Bos taurus (Bovine).